We begin with the raw amino-acid sequence, 518 residues long: GMP synthase [glutamine-hydrolyzing] (518 aa).

A Glutamine amidotransferase type-1 domain is found at 11-203; sequence SILVLDFGSQ…AFDVCQAEAN (193 aa). The active-site Nucleophile is the Cys88. Residues His177 and Glu179 contribute to the active site. In terms of domain architecture, GMPS ATP-PPase spans 204-393; that stretch reads WSMDDFIDMQ…LGMPSDLVWR (190 aa). 231–237 provides a ligand contact to ATP; the sequence is SGGVDSS.

Homodimer.

It carries out the reaction XMP + L-glutamine + ATP + H2O = GMP + L-glutamate + AMP + diphosphate + 2 H(+). It participates in purine metabolism; GMP biosynthesis; GMP from XMP (L-Gln route): step 1/1. Catalyzes the synthesis of GMP from XMP. The sequence is that of GMP synthase [glutamine-hydrolyzing] from Lactiplantibacillus plantarum (strain ATCC BAA-793 / NCIMB 8826 / WCFS1) (Lactobacillus plantarum).